Here is a 352-residue protein sequence, read N- to C-terminus: Protein RecA (352 aa).

Position 67–74 (67–74 (GPESSGKT)) interacts with ATP. Residues 333–352 (DSTPDFAVDGNDAEETEQDF) form a disordered region. Positions 343–352 (NDAEETEQDF) are enriched in acidic residues.

Belongs to the RecA family.

The protein localises to the cytoplasm. Functionally, can catalyze the hydrolysis of ATP in the presence of single-stranded DNA, the ATP-dependent uptake of single-stranded DNA by duplex DNA, and the ATP-dependent hybridization of homologous single-stranded DNAs. It interacts with LexA causing its activation and leading to its autocatalytic cleavage. In Klebsiella pneumoniae (strain 342), this protein is Protein RecA.